Here is a 266-residue protein sequence, read N- to C-terminus: Undecaprenyl-diphosphatase (266 aa).

8 consecutive transmembrane segments (helical) span residues 1–21 (MTLF…FLPI), 39–59 (QGLA…MIYF), 87–107 (WYVI…KGWI), 113–133 (TALV…YADA), 143–163 (GLTL…LIPG), 187–207 (FSFL…TLDL), 218–238 (ALLY…YLFL), and 244–264 (IGML…LWFV).

Belongs to the UppP family.

The protein resides in the cell inner membrane. The catalysed reaction is di-trans,octa-cis-undecaprenyl diphosphate + H2O = di-trans,octa-cis-undecaprenyl phosphate + phosphate + H(+). Its function is as follows. Catalyzes the dephosphorylation of undecaprenyl diphosphate (UPP). Confers resistance to bacitracin. The polypeptide is Undecaprenyl-diphosphatase (Alteromonas mediterranea (strain DSM 17117 / CIP 110805 / LMG 28347 / Deep ecotype)).